The primary structure comprises 71 residues: NAD(P)H-quinone oxidoreductase subunit O (71 aa).

Belongs to the complex I NdhO subunit family. As to quaternary structure, NDH-1 can be composed of about 15 different subunits; different subcomplexes with different compositions have been identified which probably have different functions.

It localises to the cellular thylakoid membrane. It carries out the reaction a plastoquinone + NADH + (n+1) H(+)(in) = a plastoquinol + NAD(+) + n H(+)(out). The enzyme catalyses a plastoquinone + NADPH + (n+1) H(+)(in) = a plastoquinol + NADP(+) + n H(+)(out). Functionally, NDH-1 shuttles electrons from an unknown electron donor, via FMN and iron-sulfur (Fe-S) centers, to quinones in the respiratory and/or the photosynthetic chain. The immediate electron acceptor for the enzyme in this species is believed to be plastoquinone. Couples the redox reaction to proton translocation, and thus conserves the redox energy in a proton gradient. Cyanobacterial NDH-1 also plays a role in inorganic carbon-concentration. The chain is NAD(P)H-quinone oxidoreductase subunit O from Microcystis aeruginosa (strain NIES-843 / IAM M-2473).